A 220-amino-acid polypeptide reads, in one-letter code: Small ribosomal subunit protein uS2 (220 aa).

Residues leucine 201–arginine 220 are disordered.

It belongs to the universal ribosomal protein uS2 family.

This Staphylothermus marinus (strain ATCC 43588 / DSM 3639 / JCM 9404 / F1) protein is Small ribosomal subunit protein uS2.